A 105-amino-acid chain; its full sequence is Integration host factor subunit alpha (105 aa).

The protein belongs to the bacterial histone-like protein family. In terms of assembly, heterodimer of an alpha and a beta chain.

In terms of biological role, this protein is one of the two subunits of integration host factor, a specific DNA-binding protein that functions in genetic recombination as well as in transcriptional and translational control. The protein is Integration host factor subunit alpha of Azorhizobium caulinodans (strain ATCC 43989 / DSM 5975 / JCM 20966 / LMG 6465 / NBRC 14845 / NCIMB 13405 / ORS 571).